The chain runs to 764 residues: Zygote defective protein 12 (764 aa).

A compositionally biased stretch (polar residues) spans 1–20 (MLDLTNQESDSSENGNSKYA). The interval 1 to 33 (MLDLTNQESDSSENGNSKYADSTDGRGIGTSRR) is disordered. An interaction with dli-1 region spans residues 1–236 (MLDLTNQESD…ESSVITNGNG (236 aa)). One can recognise a Calponin-homology (CH) domain in the interval 43–169 (RKDLADLVFW…VSLAFIGKTQ (127 aa)). Coiled coils occupy residues 244 to 405 (LSAN…HVKT) and 436 to 692 (GLES…NRLI). A helical transmembrane segment spans residues 732–752 (ALPWRFGISSMLIIFMVWFFI).

Belongs to the hook family. Homodimer. Interacts with the dynein subunit dli-1 via its N-terminus. May interact with microtubules.

Its subcellular location is the nucleus membrane. The protein resides in the cytoplasm. It is found in the cytoskeleton. It localises to the microtubule organizing center. The protein localises to the centrosome. Its function is as follows. Cytoskeletal linker protein, which is essential for attachment of the centrosome to the nucleus. Required for dynein localization to the nuclear envelope. This Caenorhabditis briggsae protein is Zygote defective protein 12 (zyg-12).